The chain runs to 315 residues: Ribosomal RNA small subunit methyltransferase H (315 aa).

Residues 42–44 (GGH), aspartate 59, phenylalanine 96, aspartate 108, and glutamine 115 each bind S-adenosyl-L-methionine.

Belongs to the methyltransferase superfamily. RsmH family.

The protein localises to the cytoplasm. It carries out the reaction cytidine(1402) in 16S rRNA + S-adenosyl-L-methionine = N(4)-methylcytidine(1402) in 16S rRNA + S-adenosyl-L-homocysteine + H(+). Specifically methylates the N4 position of cytidine in position 1402 (C1402) of 16S rRNA. The sequence is that of Ribosomal RNA small subunit methyltransferase H from Gemmatimonas aurantiaca (strain DSM 14586 / JCM 11422 / NBRC 100505 / T-27).